Reading from the N-terminus, the 517-residue chain is Crotonobetaine/carnitine--CoA ligase (517 aa).

This sequence belongs to the ATP-dependent AMP-binding enzyme family.

The enzyme catalyses 4-(trimethylamino)butanoate + ATP + CoA = 4-(trimethylamino)butanoyl-CoA + AMP + diphosphate. It catalyses the reaction crotonobetaine + ATP + CoA = crotonobetainyl-CoA + AMP + diphosphate. It carries out the reaction (R)-carnitine + ATP + CoA = (R)-carnitinyl-CoA + AMP + diphosphate. Its pathway is amine and polyamine metabolism; carnitine metabolism. Catalyzes the transfer of CoA to carnitine, generating the initial carnitinyl-CoA needed for the CaiB reaction cycle. Also has activity toward crotonobetaine and gamma-butyrobetaine. The polypeptide is Crotonobetaine/carnitine--CoA ligase (Salmonella paratyphi C (strain RKS4594)).